Reading from the N-terminus, the 680-residue chain is Putative E3 ubiquitin-protein ligase UNKL (680 aa).

Residues 1–22 are disordered; that stretch reads MPSVSKAAAAALSGSPPQTEKP. 4 consecutive C3H1-type zinc fingers follow at residues 75–104, 115–145, 243–277, and 283–310; these read YSPDVYCSKYNEATGVCPDGDECPYLHRTT, YYKTGTCIHETDARGHCVKNGLHCAFAHGPL, QYRSTPCPSVKHGDEWGEPSRCDGGDGCQYCHSRT, and PESTKCNDMRQTGYCPRGPFCAFAHVEK. Low complexity-rich tracts occupy residues 326 to 337, 375 to 396, 465 to 497, and 545 to 562; these read TSPSSTGSGQPG, VSSSVASSLASSAGSGSSSPTA, SLPRAPSLHSPSSASTSPLGSLSQPLPGPVGSS, and SPSPILSAGPPSSSSASP. 4 disordered regions span residues 326-358, 375-400, 442-520, and 545-566; these read TSPSSTGSGQPGNAKRRDSPAEGGPRGSEQDSK, VSSSVASSLASSAGSGSSSPTALPAP, DGHD…SAAS, and SPSPILSAGPPSSSSASPNGAE. A coiled-coil region spans residues 563 to 619; that stretch reads NGAELARVRRQLDEAKRKIRQWEESWQQVKQVCDAWQREAQEAKERARVADSDRQLA. The RING-type zinc-finger motif lies at 639-674; it reads CVACRERAHGAVLRPCQHHILCEPCAATAPECPYCK.

It belongs to the unkempt family. As to quaternary structure, isoform 4 (C-terminal) interacts with the GTP-bound form of RAC1. Isoform 4 (C-terminal) interacts with SMARCD2/BAF60b. Isoform 4 is ubiquitinated in the C-terminal. Ubiquitination is enhanced by activated RAC1. The presence of the RING finger domain is not essential for ubiquitination to occur.

The protein resides in the cytoplasm. It is found in the nucleus. It participates in protein modification; protein ubiquitination. Its function is as follows. May participate in a protein complex showing an E3 ligase activity regulated by RAC1. Ubiquitination is directed towards itself and possibly other substrates, such as SMARCD2/BAF60b. Intrinsic E3 ligase activity has not been proven. This Homo sapiens (Human) protein is Putative E3 ubiquitin-protein ligase UNKL (UNKL).